Reading from the N-terminus, the 880-residue chain is Alanine--tRNA ligase (880 aa).

Residues His569, His573, Cys671, and His675 each contribute to the Zn(2+) site.

It belongs to the class-II aminoacyl-tRNA synthetase family. In terms of assembly, homotetramer. Zn(2+) is required as a cofactor.

It is found in the cytoplasm. It catalyses the reaction tRNA(Ala) + L-alanine + ATP = L-alanyl-tRNA(Ala) + AMP + diphosphate. In terms of biological role, catalyzes the attachment of alanine to tRNA(Ala) in a two-step reaction: alanine is first activated by ATP to form Ala-AMP and then transferred to the acceptor end of tRNA(Ala). Also edits incorrectly charged Ser-tRNA(Ala) and Gly-tRNA(Ala) via its editing domain. This is Alanine--tRNA ligase from Buchnera aphidicola subsp. Baizongia pistaciae (strain Bp).